The chain runs to 382 residues: Caspase-1-B (382 aa).

The propeptide occupies 1 to 98 (MTAQLNKVRK…HEHAPSPIQE (98 aa)). Catalysis depends on residues H216 and C270. Positions 283 to 292 (DVAPAPLEDD) are excised as a propeptide.

This sequence belongs to the peptidase C14A family. In terms of assembly, heterotetramer that consists of two anti-parallel arranged heterodimers, each one formed by a 20 kDa (Caspase-1 subunit p20) and a 10 kDa (Caspase-1 subunit p10) subunit. Heterotetramer that consists of two anti-parallel arranged heterodimers, each one formed by a 20 kDa (Caspase-1 subunit p20) and a 10 kDa (Caspase-1 subunit p10) subunit. Can form a heterodimer with isoform epsilon which then has an inhibitory effect. The two subunits are derived from the precursor sequence by an autocatalytic mechanism.

It is found in the cytoplasm. The protein localises to the cell membrane. The enzyme catalyses Strict requirement for an Asp residue at position P1 and has a preferred cleavage sequence of Tyr-Val-Ala-Asp-|-.. In terms of biological role, thiol protease involved in a variety of inflammatory processes by proteolytically cleaving other proteins, such as the precursors of the inflammatory cytokines interleukin-1 beta (IL1B) and interleukin 18 (IL18) as well as the pyroptosis inducer Gasdermin-D (GSDMD), into active mature peptides. Plays a key role in cell immunity as an inflammatory response initiator: once activated through formation of an inflammasome complex, it initiates a pro-inflammatory response through the cleavage of the two inflammatory cytokines IL1B and IL18, releasing the mature cytokines which are involved in a variety of inflammatory processes. Cleaves a tetrapeptide after an Asp residue at position P1. Also initiates pyroptosis, a programmed lytic cell death pathway, through cleavage of GSDMD. This is Caspase-1-B (casp1-b) from Xenopus laevis (African clawed frog).